Consider the following 979-residue polypeptide: Receptor-type tyrosine-protein phosphatase-like N (979 aa).

An N-terminal signal peptide occupies residues 1–34; the sequence is MRRPRRPGGLGGSGGLRLLLCLLLLSSRPGGCSA. Residues 35-131 are RESP18 homology domain; that stretch reads VSAHGCLFDR…RPRDRSGLAP (97 aa). The Lumenal segment spans residues 35-575; it reads VSAHGCLFDR…QTAHSTSPMR (541 aa). An intrachain disulfide couples Cys-53 to Cys-62. Basic and acidic residues-rich tracts occupy residues 112 to 127 and 304 to 323; these read RIPR…RDRS and RAED…RGEK. Disordered stretches follow at residues 112 to 173, 289 to 329, and 393 to 439; these read RIPR…SSSL, SRAR…SPAV, and VEGR…ARPP. The residue at position 308 (Ser-308) is a Phosphoserine. Over residues 415–433 the composition is skewed to low complexity; the sequence is SPTSSEVQQVPSPVSSEPP. O-linked (GalNAc...) threonine glycosylation occurs at Thr-441. Residues 449–575 are sufficient for dimerization of proICA512; the sequence is SPLGQSQPTV…QTAHSTSPMR (127 aa). N-linked (GlcNAc...) asparagine glycans are attached at residues Asn-506 and Asn-524. A helical transmembrane segment spans residues 576–600; it reads SVLLTLVALAGVAGLLVALAVALCV. A sufficient for dimerization of proICA512 region spans residues 601–732; the sequence is RQHARQQDKE…PNTCATAQGE (132 aa). Topologically, residues 601–979 are cytoplasmic; it reads RQHARQQDKE…VNAILKALPQ (379 aa). Positions 643–680 are disordered; the sequence is NRAEGPPEPSRVSSVSSQFSDAAQASPSSHSSTPSWCE. Residues 652–677 show a composition bias toward low complexity; the sequence is SRVSSVSSQFSDAAQASPSSHSSTPS. The 261-residue stretch at 709–969 folds into the Tyrosine-protein phosphatase domain; sequence LAKEWQALCA…EFALTAVAEE (261 aa). Lys-754 participates in a covalent cross-link: Glycyl lysine isopeptide (Lys-Gly) (interchain with G-Cter in SUMO).

Belongs to the protein-tyrosine phosphatase family. Receptor class 8 subfamily. In terms of assembly, homodimer; shown for the unprocessed protein (proICA512) in the endoplasmic reticulum and resolved during protein maturation as ICA512-TMF seems to be predominantly monomeric in secretory granules; however, ICA512-CCF interacts with ICA512-TMF disrupting the ICA512-TMF:SNTB2 complex. The isolated lumenal RESP18 homology domain has been shown to form disulfide-linked homooligomers. Interacts (via cytoplasmic domain) with phosphorylated SNTB2; this protects PTPRN against cleavage by CAPN1 to produce ICA512-CCF. Dephosphorylation of SNTB2 upon insulin stimulation disrupts the interaction and results in PTPRN cleavage. Interacts with SNX19. ICA512-CCF interacts with PIAS4; in the nucleus. Interacts with STAT5B (phosphorylated); down-regulated by ICA512-CCF sumoylation; ICA512-CCF prevents STAT5B dephosphorylation; ICA512-CCF mediates interaction of STAT5B with PIAS4. Interacts (via RESP18 homology domain) with insulin and proinsulin. Interacts with PTPRN2, PTPRA and PTPRE. In terms of processing, N-glycosylated. O-glycosylated with core 1 or possibly core 8 glycans. Post-translationally, subject to proteolytic cleavage at multiple sites. Subject to cleavage on a pair of basic residues. On exocytosis of secretory granules in pancreatic beta-cells ICA512-TMF is transiently inserted in the plasma-membrane and cleaved by mu-type calpain CPN1 to yield ICA512-CCF. In terms of processing, sumoylated at two sites including Lys-754. Sumoylation decreases interaction with STAT5. In terms of tissue distribution, expression is restricted to neuroendocrine cells. Found in pancreas, brain and pituitary.

The protein localises to the membrane. Its subcellular location is the cytoplasmic vesicle. The protein resides in the secretory vesicle membrane. It localises to the perikaryon. It is found in the cell projection. The protein localises to the axon. Its subcellular location is the synapse. The protein resides in the cell membrane. It localises to the endosome. It is found in the nucleus. Its function is as follows. Plays a role in vesicle-mediated secretory processes. Required for normal accumulation of secretory vesicles in hippocampus, pituitary and pancreatic islets. Required for the accumulation of normal levels of insulin-containing vesicles and preventing their degradation. Plays a role in insulin secretion in response to glucose stimuli. Required for normal accumulation of the neurotransmitters norepinephrine, dopamine and serotonin in the brain. In females, but not in males, required for normal accumulation and secretion of pituitary hormones, such as luteinizing hormone (LH) and follicle-stimulating hormone (FSH). Required to maintain normal levels of renin expression and renin release. Seems to lack intrinsic enzyme activity. May regulate catalytic active protein-tyrosine phosphatases such as PTPRA through dimerization. ICA512-TMF regulates dynamics and exocytosis of insulin secretory granules (SGs); binding of ICA512-TMF to SNTB2/beta-2-syntrophin is proposed to restrain SGs mobility and exocytosis by tethering them to the actin cytoskeleton depending on UTRN; the function is inhibited by cytoplasmic ICA512-CFF dimerizing with ICA512-TMF and displacing SNTB2. Functionally, ICA512-CCF translocated to the nucleus promotes expression of insulin and other granule-related genes; the function implicates binding to and regulating activity of STAT5B probably by preventing its dephosphorylation and potentially by inducing its sumoylation by recruiting PIAS4. Enhances pancreatic beta-cell proliferation by converging with signaling by STAT5B and STAT3. ICA512-CCF located in the cytoplasm regulates dynamics and exocytosis of insulin secretory granules (SGs) by dimerizing with ICA512-TMF and displacing SNTB2 thus enhancing SGs mobility and exocytosis. The protein is Receptor-type tyrosine-protein phosphatase-like N (PTPRN) of Homo sapiens (Human).